Here is a 228-residue protein sequence, read N- to C-terminus: Probable GTP-binding protein EngB (228 aa).

Positions 48–222 constitute an EngB-type G domain; it reads YGLEVAFVGY…QFVLNNWFSS (175 aa). Residues 56-63, 83-87, 101-104, 168-171, and 201-203 contribute to the GTP site; these read GYSNSGKS, GRTRL, DFPG, NKMD, and FSS. Mg(2+) is bound by residues Ser-63 and Thr-85.

The protein belongs to the TRAFAC class TrmE-Era-EngA-EngB-Septin-like GTPase superfamily. EngB GTPase family. It depends on Mg(2+) as a cofactor.

Its function is as follows. Necessary for normal cell division and for the maintenance of normal septation. This Buchnera aphidicola subsp. Baizongia pistaciae (strain Bp) protein is Probable GTP-binding protein EngB.